A 478-amino-acid polypeptide reads, in one-letter code: MATFDRNDPQLAGTMFPTRIEANVFDLEIEGEIPRAINGSFFRNTPEPQVTTQPFHTFIDGDGLASAFHFEDGQVDFVSRWVCTPRFEAERSARKSLFGMYRNPFTDDPSVEGIDRTVANTSIITHHGKVLAAKEDGLPYELDPQTLETRGRYDYKGQVTSHTHTAHPKFDPQTGEMLLFGSAAKGERTLDMAYYIVDRYGKVTHETWFKQPYGAFMHDFAVTRNWSIFPIMPATNSLERLKAKQPIYMWEPERGSYIGVLPRRGQGKDIRWFRAPALWVFHVVNAWEEGNRILIDLMESEILPFPFPNSQNLPFDPSKAVPRLTRWEIDLNSGNDEMKRTQLHEYFAEMPIMDFRFALQDHRYAYMGVDDPRRPLAHQQAEKIFAYNSLGVWDNHRKDYELWFTGKMSAAQEPAFVPRSPDAPEGDGYLLSVVGRLDEDRSDLVILDTQCLAAGPVATVKLPFRLRAALHGCWQSKN.

Fe cation contacts are provided by His-167, His-218, His-282, and His-471.

The protein belongs to the carotenoid oxygenase family. As to quaternary structure, monomer. It depends on Fe(2+) as a cofactor.

The catalysed reaction is (E)-isoeugenol + O2 = vanillin + acetaldehyde. With respect to regulation, inhibited by HgCl(2), AgNO(3), CuCl(2), phenylhydrazine, 8-hydroxyquinoline, R-cycloserine and p-chloromercuribenzoic acid. In terms of biological role, involved in isoeugenol degradation. Catalyzes the oxidative cleavage of the side chain double-bond of isoeugenol to form vanillin and acetaldehyde. This is Isoeugenol monooxygenase from Pseudomonas putida (Arthrobacter siderocapsulatus).